The chain runs to 468 residues: Mitochondrial distribution and morphology protein 10 (468 aa).

This sequence belongs to the MDM10 family. In terms of assembly, component of the ER-mitochondria encounter structure (ERMES) or MDM complex, composed of MMM1, MDM10, MDM12 and MDM34. Associates with the mitochondrial outer membrane sorting assembly machinery SAM(core) complex.

The protein resides in the mitochondrion outer membrane. Functionally, component of the ERMES/MDM complex, which serves as a molecular tether to connect the endoplasmic reticulum and mitochondria. Components of this complex are involved in the control of mitochondrial shape and protein biogenesis and may function in phospholipid exchange. MDM10 is involved in the late assembly steps of the general translocase of the mitochondrial outer membrane (TOM complex). Functions in the TOM40-specific route of the assembly of outer membrane beta-barrel proteins, including the association of TOM40 with the receptor TOM22 and small TOM proteins. Can associate with the SAM(core) complex as well as the MDM12-MMM1 complex, both involved in late steps of the major beta-barrel assembly pathway, that is responsible for biogenesis of all outer membrane beta-barrel proteins. May act as a switch that shuttles between both complexes and channels precursor proteins into the TOM40-specific pathway. Plays a role in mitochondrial morphology and in the inheritance of mitochondria. In Blastomyces gilchristii (strain SLH14081) (Blastomyces dermatitidis), this protein is Mitochondrial distribution and morphology protein 10.